The sequence spans 552 residues: Hyaluronan synthase 2 (552 aa).

Residues 1–11 lie on the Cytoplasmic side of the membrane; the sequence is MHCERFLCILR. A helical transmembrane segment spans residues 12–32; sequence IIGTTLFGVSLLLGITAAYIV. Residues 33 to 45 lie on the Extracellular side of the membrane; that stretch reads GYQFIQTDNYYFS. Residues 46 to 66 form a helical membrane-spanning segment; that stretch reads FGLYGAFLASHLIIQSLFAFL. Residues 67-374 are Cytoplasmic-facing; the sequence is EHRKMKKSLE…NAMWFHKHHL (308 aa). Position 110 is a phosphothreonine (threonine 110). Lysine 190 participates in a covalent cross-link: Glycyl lysine isopeptide (Lys-Gly) (interchain with G-Cter in ubiquitin). Serine 221 carries an O-linked (GlcNAc) serine glycan. Residue threonine 328 is modified to Phosphothreonine. The chain crosses the membrane as a helical span at residues 375-395; it reads WMTYEAVITGFFPFFLIATVI. The Extracellular segment spans residues 396–402; sequence QLFYRGK. Residues 403–423 traverse the membrane as a helical segment; it reads IWNILLFLLTVQLVGLIKSSF. The Cytoplasmic portion of the chain corresponds to 424-429; the sequence is ASCLRG. Residues 430–450 traverse the membrane as a helical segment; sequence NIVMVFMSLYSVLYMSSLLPA. The Extracellular portion of the chain corresponds to 451 to 475; it reads KMFAIATINKAGWGTSGRKTIVVNF. The helical transmembrane segment at 476-496 threads the bilayer; sequence IGLIPVSVWFTILLGGVIFTI. Residues 497–510 lie on the Cytoplasmic side of the membrane; that stretch reads YKESKKPFSESKQT. A helical membrane pass occupies residues 511-531; it reads VLIVGTLLYACYWVMLLTLYV. The Extracellular segment spans residues 532–552; the sequence is VLINKCGRRKKGQQYDMVLDV.

This sequence belongs to the NodC/HAS family. Homodimer; dimerization promotes enzymatic activity. Forms heterodimer with HAS3. Forms heterodimer with HAS1. The cofactor is Mg(2+). Phosphorylation at Thr-328 is essential for hyaluronan synthase activity. In terms of processing, O-GlcNAcylation at Ser-221 increases the stability of HAS2 and plasma membrane localization. Post-translationally, ubiquitination at Lys-190; this ubiquitination is essential for hyaluronan synthase activity and homo- or hetero-oligomerization. Can also be poly-ubiquitinated. Deubiquitinated by USP17L22/USP17 and USP4. USP17L22/USP17 efficiently removes 'Lys-63'- and 'Lys-48'-linked polyubiquitin chains, whereas USP4 preferentially removes monoubiquitination and, partially, both 'Lys-63'- and 'Lys-48'-linked polyubiquitin chain. As to expression, overexpressed in skin fibroblasts.

It is found in the cell membrane. The protein resides in the endoplasmic reticulum membrane. The protein localises to the vesicle. It localises to the golgi apparatus membrane. Its subcellular location is the lysosome. It catalyses the reaction [hyaluronan](n) + UDP-N-acetyl-alpha-D-glucosamine = N-acetyl-beta-D-glucosaminyl-(1-&gt;4)-[hyaluronan](n) + UDP + H(+). It carries out the reaction N-acetyl-beta-D-glucosaminyl-(1-&gt;4)-[hyaluronan](n) + UDP-alpha-D-glucuronate = [hyaluronan](n+1) + UDP + H(+). The protein operates within glycan biosynthesis; hyaluronan biosynthesis. Functionally, catalyzes the addition of GlcNAc or GlcUA monosaccharides to the nascent hyaluronan polymer. Therefore, it is essential to hyaluronan synthesis a major component of most extracellular matrices that has a structural role in tissues architectures and regulates cell adhesion, migration and differentiation. This is one of three isoenzymes responsible for cellular hyaluronan synthesis and it is particularly responsible for the synthesis of high molecular mass hyaluronan. The sequence is that of Hyaluronan synthase 2 (Has2) from Heterocephalus glaber (Naked mole rat).